The chain runs to 276 residues: NAD kinase (276 aa).

The active-site Proton acceptor is Asp61. NAD(+) contacts are provided by residues 61–62, Arg66, 135–136, Arg146, His163, Asp165, and Ala200; these read DG and NE.

The protein belongs to the NAD kinase family. A divalent metal cation serves as cofactor.

It localises to the cytoplasm. It carries out the reaction NAD(+) + ATP = ADP + NADP(+) + H(+). Involved in the regulation of the intracellular balance of NAD and NADP, and is a key enzyme in the biosynthesis of NADP. Catalyzes specifically the phosphorylation on 2'-hydroxyl of the adenosine moiety of NAD to yield NADP. In Chloroflexus aurantiacus (strain ATCC 29366 / DSM 635 / J-10-fl), this protein is NAD kinase.